The chain runs to 76 residues: Large ribosomal subunit protein uL29 (76 aa).

The protein belongs to the universal ribosomal protein uL29 family.

The sequence is that of Large ribosomal subunit protein uL29 from Corynebacterium glutamicum (strain R).